Reading from the N-terminus, the 351-residue chain is Large ribosomal subunit protein uL3 (351 aa).

2 disordered regions span residues M1 to T31 and K246 to G271.

The protein belongs to the universal ribosomal protein uL3 family. In terms of assembly, part of the 50S ribosomal subunit. Forms a cluster with proteins L14 and L24e.

Functionally, one of the primary rRNA binding proteins, it binds directly near the 3'-end of the 23S rRNA, where it nucleates assembly of the 50S subunit. The chain is Large ribosomal subunit protein uL3 from Saccharolobus islandicus (strain Y.N.15.51 / Yellowstone #2) (Sulfolobus islandicus).